We begin with the raw amino-acid sequence, 416 residues long: Type II methyltransferase M.PspPI (416 aa).

The SAM-dependent MTase C5-type domain maps to 77–410 (YSLVELFAGA…KAIIRMLNAA (334 aa)). Residue cysteine 149 is part of the active site.

The protein belongs to the class I-like SAM-binding methyltransferase superfamily. C5-methyltransferase family.

It catalyses the reaction a 2'-deoxycytidine in DNA + S-adenosyl-L-methionine = a 5-methyl-2'-deoxycytidine in DNA + S-adenosyl-L-homocysteine + H(+). A methylase, recognizes the double-stranded sequence 5'-GGNCC-3', methylates C-4 on both strands, and protects the DNA from cleavage by the PspPI endonuclease. The protein is Type II methyltransferase M.PspPI of Psychrobacter sp. (strain TA137).